The sequence spans 365 residues: Peptide chain release factor 2 (365 aa).

Gln-252 is subject to N5-methylglutamine.

Belongs to the prokaryotic/mitochondrial release factor family. In terms of processing, methylated by PrmC. Methylation increases the termination efficiency of RF2.

It is found in the cytoplasm. In terms of biological role, peptide chain release factor 2 directs the termination of translation in response to the peptide chain termination codons UGA and UAA. In Salmonella typhimurium (strain LT2 / SGSC1412 / ATCC 700720), this protein is Peptide chain release factor 2 (prfB).